The sequence spans 148 residues: Protein PLANT CADMIUM RESISTANCE 9 (148 aa).

Residues L59 to S78 form a helical membrane-spanning segment.

It belongs to the cornifelin family.

Its subcellular location is the membrane. In terms of biological role, may be involved in cadmium resistance. The sequence is that of Protein PLANT CADMIUM RESISTANCE 9 (PCR9) from Arabidopsis thaliana (Mouse-ear cress).